The chain runs to 311 residues: Heme A synthase (311 aa).

The Cytoplasmic segment spans residues 1 to 6; it reads MQRFIK. Residues 7 to 27 traverse the membrane as a helical segment; that stretch reads WLAVITSLDLLIVLLGGALVT. At 28 to 62 the chain is on the extracellular side; the sequence is KTGSGQGCGKSWPLCNGEFVPSNLSMETIIELSHR. Cysteine 35 and cysteine 42 are disulfide-bonded. Residue glutamate 58 is part of the active site. Histidine 61 provides a ligand contact to heme o. A helical transmembrane segment spans residues 63-83; sequence LTSGSAGILVTLLCILSWKYY. Topologically, residues 84–91 are cytoplasmic; the sequence is KHVRETKT. The chain crosses the membrane as a helical span at residues 92–112; that stretch reads LAILSFVFLVAQALMGAAAVV. Topologically, residues 113 to 121 are extracellular; that stretch reads WGQMPAVLA. A helical transmembrane segment spans residues 122–142; the sequence is IHFGISLISFASVILLTCLIF. Heme o is bound at residue histidine 123. Over 143 to 159 the chain is Cytoplasmic; it reads EIDQKFDARSLIMDKKM. Residues 160 to 180 traverse the membrane as a helical segment; sequence KFHIYGVTIYSYIVVYTGALV. The Extracellular portion of the chain corresponds to 181 to 211; the sequence is RHERASLACPDFPLCSKNRPMPTQLHEWVQM. The cysteines at positions 189 and 195 are disulfide-linked. Residues 212 to 232 form a helical membrane-spanning segment; the sequence is GHRVAAMLIFAWILYAMILAI. Residue histidine 213 coordinates heme b. The Cytoplasmic segment spans residues 233–243; sequence RHYKQQPVVYW. The chain crosses the membrane as a helical span at residues 244 to 264; sequence GWIISFILVTLQAVVGVLVVF. Residues 265–271 lie on the Extracellular side of the membrane; it reads TNASLAM. The chain crosses the membrane as a helical span at residues 272–292; that stretch reads ALLHSLFISCLFAVLCYLVML. Histidine 275 contacts heme b. The Cytoplasmic portion of the chain corresponds to 293–311; it reads GTRSKVNAKEAELTSKQTK.

It belongs to the COX15/CtaA family. Type 1 subfamily. Interacts with CtaB. It depends on heme b as a cofactor.

Its subcellular location is the cell membrane. It catalyses the reaction Fe(II)-heme o + 2 A + H2O = Fe(II)-heme a + 2 AH2. It functions in the pathway porphyrin-containing compound metabolism; heme A biosynthesis; heme A from heme O: step 1/1. Functionally, catalyzes the conversion of heme O to heme A by two successive hydroxylations of the methyl group at C8. The first hydroxylation forms heme I, the second hydroxylation results in an unstable dihydroxymethyl group, which spontaneously dehydrates, resulting in the formyl group of heme A. The protein is Heme A synthase of Bacillus cereus (strain ATCC 14579 / DSM 31 / CCUG 7414 / JCM 2152 / NBRC 15305 / NCIMB 9373 / NCTC 2599 / NRRL B-3711).